The sequence spans 249 residues: Ubiquinone/menaquinone biosynthesis C-methyltransferase UbiE (249 aa).

S-adenosyl-L-methionine contacts are provided by residues Thr72, Asp93, and 121–122 (DA).

Belongs to the class I-like SAM-binding methyltransferase superfamily. MenG/UbiE family.

The catalysed reaction is a 2-demethylmenaquinol + S-adenosyl-L-methionine = a menaquinol + S-adenosyl-L-homocysteine + H(+). It catalyses the reaction a 2-methoxy-6-(all-trans-polyprenyl)benzene-1,4-diol + S-adenosyl-L-methionine = a 5-methoxy-2-methyl-3-(all-trans-polyprenyl)benzene-1,4-diol + S-adenosyl-L-homocysteine + H(+). The protein operates within quinol/quinone metabolism; menaquinone biosynthesis; menaquinol from 1,4-dihydroxy-2-naphthoate: step 2/2. It functions in the pathway cofactor biosynthesis; ubiquinone biosynthesis. Its function is as follows. Methyltransferase required for the conversion of demethylmenaquinol (DMKH2) to menaquinol (MKH2) and the conversion of 2-polyprenyl-6-methoxy-1,4-benzoquinol (DDMQH2) to 2-polyprenyl-3-methyl-6-methoxy-1,4-benzoquinol (DMQH2). The chain is Ubiquinone/menaquinone biosynthesis C-methyltransferase UbiE from Teredinibacter turnerae (strain ATCC 39867 / T7901).